The following is a 403-amino-acid chain: CCA-adding enzyme (403 aa).

ATP-binding residues include Gly32 and Arg35. CTP contacts are provided by Gly32 and Arg35. Mg(2+) is bound by residues Asp45 and Asp47. Positions 116, 159, 162, 165, and 168 each coordinate ATP. Positions 116, 159, 162, 165, and 168 each coordinate CTP.

It belongs to the tRNA nucleotidyltransferase/poly(A) polymerase family. Bacterial CCA-adding enzyme type 3 subfamily. Homodimer. It depends on Mg(2+) as a cofactor.

It catalyses the reaction a tRNA precursor + 2 CTP + ATP = a tRNA with a 3' CCA end + 3 diphosphate. It carries out the reaction a tRNA with a 3' CCA end + 2 CTP + ATP = a tRNA with a 3' CCACCA end + 3 diphosphate. Its function is as follows. Catalyzes the addition and repair of the essential 3'-terminal CCA sequence in tRNAs without using a nucleic acid template. Adds these three nucleotides in the order of C, C, and A to the tRNA nucleotide-73, using CTP and ATP as substrates and producing inorganic pyrophosphate. tRNA 3'-terminal CCA addition is required both for tRNA processing and repair. Also involved in tRNA surveillance by mediating tandem CCA addition to generate a CCACCA at the 3' terminus of unstable tRNAs. While stable tRNAs receive only 3'-terminal CCA, unstable tRNAs are marked with CCACCA and rapidly degraded. The polypeptide is CCA-adding enzyme (Limosilactobacillus reuteri (strain DSM 20016) (Lactobacillus reuteri)).